The sequence spans 448 residues: Tubulin alpha-5 chain (448 aa).

The MREC motif signature appears at 1–4; that stretch reads MREC. Glutamine 11 provides a ligand contact to GTP. Lysine 40 bears the N6-acetyllysine mark. GTP-binding residues include glutamate 71, serine 140, glycine 144, threonine 145, threonine 179, asparagine 206, and asparagine 228. A Mg(2+)-binding site is contributed by glutamate 71. Residue glutamate 254 is part of the active site.

Belongs to the tubulin family. In terms of assembly, dimer of alpha and beta chains. A typical microtubule is a hollow water-filled tube with an outer diameter of 25 nm and an inner diameter of 15 nM. Alpha-beta heterodimers associate head-to-tail to form protofilaments running lengthwise along the microtubule wall with the beta-tubulin subunit facing the microtubule plus end conferring a structural polarity. Microtubules usually have 13 protofilaments but different protofilament numbers can be found in some organisms and specialized cells. Requires Mg(2+) as cofactor. Some glutamate residues at the C-terminus are polyglycylated, resulting in polyglycine chains on the gamma-carboxyl group. Glycylation is mainly limited to tubulin incorporated into axonemes (cilia and flagella) whereas glutamylation is prevalent in neuronal cells, centrioles, axonemes, and the mitotic spindle. Both modifications can coexist on the same protein on adjacent residues, and lowering polyglycylation levels increases polyglutamylation, and reciprocally. The precise function of polyglycylation is still unclear. In terms of processing, some glutamate residues at the C-terminus are polyglutamylated, resulting in polyglutamate chains on the gamma-carboxyl group. Polyglutamylation plays a key role in microtubule severing by spastin (SPAST). SPAST preferentially recognizes and acts on microtubules decorated with short polyglutamate tails: severing activity by SPAST increases as the number of glutamates per tubulin rises from one to eight, but decreases beyond this glutamylation threshold. Post-translationally, acetylation of alpha chains at Lys-40 is located inside the microtubule lumen. This modification has been correlated with increased microtubule stability, intracellular transport and ciliary assembly.

It is found in the cytoplasm. Its subcellular location is the cytoskeleton. It carries out the reaction GTP + H2O = GDP + phosphate + H(+). Its function is as follows. Tubulin is the major constituent of microtubules, a cylinder consisting of laterally associated linear protofilaments composed of alpha- and beta-tubulin heterodimers. Microtubules grow by the addition of GTP-tubulin dimers to the microtubule end, where a stabilizing cap forms. Below the cap, tubulin dimers are in GDP-bound state, owing to GTPase activity of alpha-tubulin. This Gallus gallus (Chicken) protein is Tubulin alpha-5 chain.